The chain runs to 236 residues: Small ribosomal subunit protein uS2c (236 aa).

This sequence belongs to the universal ribosomal protein uS2 family.

It localises to the plastid. It is found in the chloroplast. The chain is Small ribosomal subunit protein uS2c (rps2) from Vitis vinifera (Grape).